The primary structure comprises 165 residues: Nucleotide-binding protein A9601_05361 (165 aa).

It belongs to the YajQ family.

Functionally, nucleotide-binding protein. In Prochlorococcus marinus (strain AS9601), this protein is Nucleotide-binding protein A9601_05361.